A 193-amino-acid chain; its full sequence is Probable thymidylate kinase (193 aa).

Residue 7 to 14 coordinates ATP; sequence GIDGAGKT.

Belongs to the thymidylate kinase family.

The catalysed reaction is dTMP + ATP = dTDP + ADP. This Thermoplasma acidophilum (strain ATCC 25905 / DSM 1728 / JCM 9062 / NBRC 15155 / AMRC-C165) protein is Probable thymidylate kinase (tmk).